Reading from the N-terminus, the 55-residue chain is Large ribosomal subunit protein bL33 (55 aa).

This sequence belongs to the bacterial ribosomal protein bL33 family.

The polypeptide is Large ribosomal subunit protein bL33 (Paenarthrobacter aurescens (strain TC1)).